Here is a 335-residue protein sequence, read N- to C-terminus: Phosphate acyltransferase (335 aa).

It belongs to the PlsX family. In terms of assembly, homodimer. Probably interacts with PlsY.

It is found in the cytoplasm. It catalyses the reaction a fatty acyl-[ACP] + phosphate = an acyl phosphate + holo-[ACP]. It participates in lipid metabolism; phospholipid metabolism. In terms of biological role, catalyzes the reversible formation of acyl-phosphate (acyl-PO(4)) from acyl-[acyl-carrier-protein] (acyl-ACP). This enzyme utilizes acyl-ACP as fatty acyl donor, but not acyl-CoA. This chain is Phosphate acyltransferase, found in Heliobacterium modesticaldum (strain ATCC 51547 / Ice1).